A 61-amino-acid chain; its full sequence is Large ribosomal subunit protein uL30 (61 aa).

Belongs to the universal ribosomal protein uL30 family. As to quaternary structure, part of the 50S ribosomal subunit.

This is Large ribosomal subunit protein uL30 from Mycobacterium sp. (strain KMS).